A 508-amino-acid polypeptide reads, in one-letter code: Aspartic proteinase A3 (508 aa).

The signal sequence occupies residues 1 to 25 (MGTRFQSFLLVFLLSCLILISTASC). Positions 26-69 (ERNGDGTIRIGLKKRKLDRSNRLASQLFLKNRGSHWSPKHYFRL) are cleaved as a propeptide — activation peptide. Positions 87–505 (YYGDITIGTP…DYGKGRVGFA (419 aa)) constitute a Peptidase A1 domain. Aspartate 105 is a catalytic residue. Intrachain disulfides connect cysteine 118–cysteine 124 and cysteine 283–cysteine 287. Aspartate 292 is an active-site residue. Residues 317-419 (IVSRECKAVV…AELCDHIPTQ (103 aa)) form the Saposin B-type domain. Disulfide bonds link cysteine 322-cysteine 413, cysteine 347-cysteine 385, cysteine 353-cysteine 382, and cysteine 427-cysteine 464. N-linked (GlcNAc...) asparagine glycosylation occurs at asparagine 399.

The protein belongs to the peptidase A1 family. In terms of tissue distribution, expressed in petals, carpels and seed pods.

Its subcellular location is the secreted. Functionally, involved in the processing and degradation of storage proteins. This Arabidopsis thaliana (Mouse-ear cress) protein is Aspartic proteinase A3 (APA3).